The sequence spans 355 residues: uncharacterized protein (355 aa).

58-65 (GYIIFGIK) lines the ATP pocket.

This is an uncharacterized protein from Ureaplasma parvum serovar 3 (strain ATCC 700970).